The sequence spans 1053 residues: Serine/threonine-protein phosphatase 6 regulatory ankyrin repeat subunit A (1053 aa).

27 ANK repeats span residues 40-69, 73-102, 106-135, 139-168, 172-201, 205-234, 238-267, 271-301, 305-334, 338-367, 371-400, 404-433, 437-466, 470-500, 504-534, 549-578, 582-611, 616-645, 652-681, 685-714, 718-747, 755-784, 787-817, 822-851, 855-885, 889-918, and 925-954; these read EKRT…RVNA, KWLT…DVNA, NWQT…NVNV, AGRT…NINA, KDRR…EVTC, KSYT…DMNE, YGNT…IVNQ, KGFT…DVNM, DGKT…VIDC, NGNT…DTAK, HGMF…DIDT, FGRT…DFNK, FGRS…SVND, RGCT…NPGI, QGYN…DVLM, ATIS…DLDV, SGRT…SILV, LKRT…PQNA, NGQT…NVDA, WGRT…KCLL, RGRT…SMDA, HGYT…FQKT, NAFS…SIVN, KGRT…QVNS, TGKT…ELTL, SKNT…DRNL, and ALQT…SVLA. Phosphoserine occurs at positions 1007 and 1011.

As to quaternary structure, protein phosphatase 6 (PP6) holoenzyme is proposed to be a heterotrimeric complex formed by the catalytic subunit, a SAPS domain-containing subunit (PP6R) and an ankyrin repeat-domain containing regulatory subunit (ARS). Interacts with PPP6C, PPP6R1 and PPP6R3. Interacts with PPP1C and HNRPK. Post-translationally, ubiquitinated by the ECS(RAB40C) complex leading to its degradation and decreased PP6 activity.

The protein localises to the nucleus. The protein resides in the nucleoplasm. It is found in the cytoplasm. It localises to the cytosol. Its subcellular location is the cell projection. The protein localises to the lamellipodium. Its function is as follows. Regulatory subunit of protein phosphatase 6 (PP6) that may be involved in the recognition of phosphoprotein substrates. Involved in the PP6-mediated dephosphorylation of NFKBIE opposing its degradation in response to TNF-alpha. Selectively inhibits the phosphatase activity of PPP1C. Targets PPP1C to modulate HNRPK phosphorylation. Involved in the PP6-mediated dephosphorylation of MOB1 and induced focal adhesion assembly during cell migration. The sequence is that of Serine/threonine-protein phosphatase 6 regulatory ankyrin repeat subunit A from Homo sapiens (Human).